A 397-amino-acid polypeptide reads, in one-letter code: Purine ribonucleoside efflux pump NepI (397 aa).

Residues 1-21 (MNENIAEKFRADGVARPNWSA) are Cytoplasmic-facing. The chain crosses the membrane as a helical span at residues 22 to 42 (VFAVAFCVACLITVEFLPVSL). Residues 43–54 (LTPMAQDLGISE) lie on the Periplasmic side of the membrane. The chain crosses the membrane as a helical span at residues 55 to 75 (GVAGQSVTVTAFVAMFSSLFI). Topologically, residues 76–85 (TQIIQATDRR) are cytoplasmic. Residues 86 to 106 (YIVILFAVLLTASCLMVSFAN) form a helical membrane-spanning segment. Residue Ser107 is a topological domain, periplasmic. The helical transmembrane segment at 108 to 128 (FTLLLLGRACLGLALGGFWAM) threads the bilayer. At 129–147 (SASLTMRLVPARTVPKALS) the chain is on the cytoplasmic side. Residues 148–168 (VIFGAVSIALVIAAPLGSFLG) form a helical membrane-spanning segment. Residues 169–175 (GIIGWRN) lie on the Periplasmic side of the membrane. A helical transmembrane segment spans residues 176–196 (VFNAAAVMGVLCVIWVVKSLP). The Cytoplasmic segment spans residues 197–215 (SLPGEPSHQKQNMFSLLQR). A helical membrane pass occupies residues 216 to 236 (PGVMAGMIAIFMSFAGQFAFF). Residues 237–255 (TYIRPVYMNLAGFDVDGLT) lie on the Periplasmic side of the membrane. A helical membrane pass occupies residues 256-276 (LVLLSFGIASFVGTSFSSYVL). Over 277–281 (KRSVK) the chain is Cytoplasmic. Residues 282 to 302 (LALAGAPLLLALSALTLIVWG) traverse the membrane as a helical segment. Over 303 to 305 (SDK) the chain is Periplasmic. A helical membrane pass occupies residues 306 to 326 (TVAAAIAIIWGLAFALVPVGW). The Cytoplasmic portion of the chain corresponds to 327–343 (STWITRSLADQAEKAGS). A helical membrane pass occupies residues 344 to 364 (IQVAVIQLANTCGAAVGGYAL). Topologically, residues 365–366 (DN) are periplasmic. Residues 367 to 387 (FGLLSPLALSGGLMLLTALVV) form a helical membrane-spanning segment. The Cytoplasmic segment spans residues 388–397 (AAKVRITPMS).

Belongs to the major facilitator superfamily. DHA1 family. NepI (TC 2.A.1.2.26) subfamily.

It localises to the cell inner membrane. The catalysed reaction is inosine(in) + H(+)(out) = inosine(out) + H(+)(in). It carries out the reaction guanosine(in) + H(+)(out) = guanosine(out) + H(+)(in). Its function is as follows. Involved in the efflux of purine ribonucleosides, such as inosine and guanosine. The chain is Purine ribonucleoside efflux pump NepI from Salmonella choleraesuis (strain SC-B67).